The following is a 256-amino-acid chain: Small ribosomal subunit protein eS1 (256 aa).

Residues 1–18 (MAVGKNKRLSKGKKGLKK) are compositionally biased toward basic residues. Positions 1 to 22 (MAVGKNKRLSKGKKGLKKKTQD) are disordered. At A2 the chain carries N-acetylalanine; partial.

It belongs to the eukaryotic ribosomal protein eS1 family. In terms of assembly, component of the small ribosomal subunit. Mature ribosomes consist of a small (40S) and a large (60S) subunit. The 40S subunit contains about 33 different proteins and 1 molecule of RNA (18S). The 60S subunit contains about 49 different proteins and 3 molecules of RNA (25S, 5.8S and 5S).

The protein localises to the cytoplasm. The sequence is that of Small ribosomal subunit protein eS1 from Pyricularia oryzae (strain Y34) (Rice blast fungus).